The sequence spans 336 residues: ATP-dependent 6-phosphofructokinase 3 (336 aa).

ATP is bound by residues glycine 10, arginine 72–glutamate 73, and glycine 108–threonine 111. Asparagine 109 contributes to the Mg(2+) binding site. Residues threonine 131–aspartate 133, arginine 168, methionine 175–histidine 177, glutamate 228, arginine 255, and tyrosine 261–arginine 264 contribute to the substrate site. The active-site Proton acceptor is aspartate 133.

Belongs to the phosphofructokinase type A (PFKA) family. Mixed-substrate PFK group III subfamily. As to quaternary structure, homodimer or homotetramer. Mg(2+) is required as a cofactor.

The protein localises to the cytoplasm. The catalysed reaction is beta-D-fructose 6-phosphate + ATP = beta-D-fructose 1,6-bisphosphate + ADP + H(+). It participates in carbohydrate degradation; glycolysis; D-glyceraldehyde 3-phosphate and glycerone phosphate from D-glucose: step 3/4. Its function is as follows. Catalyzes the phosphorylation of D-fructose 6-phosphate to fructose 1,6-bisphosphate by ATP, the first committing step of glycolysis. The protein is ATP-dependent 6-phosphofructokinase 3 of Bacteroides thetaiotaomicron (strain ATCC 29148 / DSM 2079 / JCM 5827 / CCUG 10774 / NCTC 10582 / VPI-5482 / E50).